A 352-amino-acid polypeptide reads, in one-letter code: Glycerol-1-phosphate dehydrogenase [NAD(P)+] (352 aa).

NAD(+) is bound by residues 98-102 (GKPID) and 120-123 (TAAS). Residue Asp125 coordinates substrate. Ser129 is an NAD(+) binding site. Asp172 serves as a coordination point for substrate. Positions 172 and 252 each coordinate Zn(2+). Substrate is bound at residue His256. Zn(2+) is bound at residue His268.

It belongs to the glycerol-1-phosphate dehydrogenase family. It depends on Zn(2+) as a cofactor.

It localises to the cytoplasm. The enzyme catalyses sn-glycerol 1-phosphate + NAD(+) = dihydroxyacetone phosphate + NADH + H(+). It catalyses the reaction sn-glycerol 1-phosphate + NADP(+) = dihydroxyacetone phosphate + NADPH + H(+). The protein operates within membrane lipid metabolism; glycerophospholipid metabolism. Functionally, catalyzes the NAD(P)H-dependent reduction of dihydroxyacetonephosphate (DHAP or glycerone phosphate) to glycerol 1-phosphate (G1P). The G1P thus generated is used as the glycerophosphate backbone of phospholipids in the cellular membranes of Archaea. The protein is Glycerol-1-phosphate dehydrogenase [NAD(P)+] of Natronomonas pharaonis (strain ATCC 35678 / DSM 2160 / CIP 103997 / JCM 8858 / NBRC 14720 / NCIMB 2260 / Gabara) (Halobacterium pharaonis).